Reading from the N-terminus, the 114-residue chain is Iron-sulfur cluster assembly protein CyaY (114 aa).

This sequence belongs to the frataxin family.

In terms of biological role, involved in iron-sulfur (Fe-S) cluster assembly. May act as a regulator of Fe-S biogenesis. The chain is Iron-sulfur cluster assembly protein CyaY from Ralstonia pickettii (strain 12J).